The chain runs to 167 residues: MCWRPLCRFLWLWSYLSYVQAVPIQKVQDDTKTLIKTIVTRINDISHTQSVSAKQRVTGLDFIPGLHPILSLSKMDQTLAVYQQVLTSLPSQNVLQIANDLENLRDLLHLLAFSKSCSLPQTSGLQKPESLDGVLEASLYSTEVVALSRLQGSLQDILQQLDVSPEC.

Residues 1 to 21 (MCWRPLCRFLWLWSYLSYVQA) form the signal peptide. Cys117 and Cys167 are oxidised to a cystine.

The protein belongs to the leptin family.

Its subcellular location is the secreted. Functionally, key player in the regulation of energy balance and body weight control. Once released into the circulation, has central and peripheral effects by binding LEPR, found in many tissues, which results in the activation of several major signaling pathways. In the hypothalamus, acts as an appetite-regulating factor that induces a decrease in food intake and an increase in energy consumption by inducing anorexinogenic factors and suppressing orexigenic neuropeptides, also regulates bone mass and secretion of hypothalamo-pituitary-adrenal hormones. In the periphery, increases basal metabolism, influences reproductive function, regulates pancreatic beta-cell function and insulin secretion, is pro-angiogenic for endothelial cell and affects innate and adaptive immunity. In the arcuate nucleus of the hypothalamus, activates by depolarization POMC neurons inducing FOS and SOCS3 expression to release anorexigenic peptides and inhibits by hyperpolarization NPY neurons inducing SOCS3 with a consequent reduction on release of orexigenic peptides. In addition to its known satiety inducing effect, has a modulatory role in nutrient absorption. In the intestine, reduces glucose absorption by enterocytes by activating PKC and leading to a sequential activation of p38, PI3K and ERK signaling pathways which exerts an inhibitory effect on glucose absorption. Acts as a growth factor on certain tissues, through the activation of different signaling pathways increases expression of genes involved in cell cycle regulation such as CCND1, via JAK2-STAT3 pathway, or VEGFA, via MAPK1/3 and PI3K-AKT1 pathways. May also play an apoptotic role via JAK2-STAT3 pathway and up-regulation of BIRC5 expression. Pro-angiogenic, has mitogenic activity on vascular endothelial cells and plays a role in matrix remodeling by regulating the expression of matrix metalloproteinases (MMPs) and tissue inhibitors of metalloproteinases (TIMPs). In innate immunity, modulates the activity and function of neutrophils by increasing chemotaxis and the secretion of oxygen radicals. Increases phagocytosis by macrophages and enhances secretion of pro-inflammatory mediators. Increases cytotoxic ability of NK cells. Plays a pro-inflammatory role, in synergy with IL1B, by inducing NOS2 which promotes the production of IL6, IL8 and Prostaglandin E2, through a signaling pathway that involves JAK2, PI3K, MAP2K1/MEK1 and MAPK14/p38. In adaptive immunity, promotes the switch of memory T-cells towards T helper-1 cell immune responses. Increases CD4(+)CD25(-) T cells proliferation and reduces autophagy during TCR (T cell receptor) stimulation, through MTOR signaling pathway activation and BCL2 up-regulation. The sequence is that of Leptin (Lep) from Mus musculus (Mouse).